Here is a 147-residue protein sequence, read N- to C-terminus: Small ribosomal subunit protein uS9 (147 aa).

A disordered region spans residues 128-147 (KERKKYGQMGARAKYRWSKR).

Belongs to the universal ribosomal protein uS9 family.

This Aquifex aeolicus (strain VF5) protein is Small ribosomal subunit protein uS9 (rpsI).